A 119-amino-acid chain; its full sequence is Ergochrome gene cluster protein CPUR_05426 (119 aa).

Its pathway is pigment biosynthesis. In terms of biological role, part of the ergochrome gene cluster responsible for the typical purple-black color of the ergot sclerotia. The ergochrome gene cluster produces several ergot pigments including the yellow ergochrome secalonic acid and its derivatives, as well as the red anthraquinones endocrocin and clavorubin. The pathway begins with the synthesis of atrochrysone thioester by the polyketide synthase (PKS) CPUR_05437. The atrochrysone carboxyl ACP thioesterase CPUR_05436 then breaks the thioester bond and releases the atrochrysone carboxylic acid from CPUR_05437. The atrochrysone carboxylic acid is then converted to atrochrysone which is further transformed into emodin anthrone. The next step is performed by the anthrone oxygenase CPUR_05434 that catalyzes the oxidation of emodinanthrone to emodin. Emodin is further modified to yield monodictyphenone via several steps involving CPUR_05427, CPUR_05428, CPUR_05429 and CPUR_05430. The short chain dehydrogenase/reductase CPUR_05418 then catalyzes the C-5 ketoreduction to give the xanthone skeleton of the monomeric units. Ergochromes formation requires further dimerization steps of different xanthone units, probably catalyzed by the cytochrome P450 monooxygenase CPUR_05419. CPUR_05425, CPUR_05426 and CPUR_05431 are unique to Claviceps, thus it is likely that they are involved in further modification of xanthone units or in their dimerization. The yellow ergochromes and the red anthraquinone pigments endocrocin and clavorubin are products from the same PKS derived precursors and the latter are likely shunt products in the pathway of xanthone biosynthesis. It is proposed that atrochrysone carboxylic acid released from the PKS CPUR_05437 can also be converted to endocrocin anthrone which is further oxidized into endocrocin by CPUR_05435. Endocrocin could be then modified to clavorubin, possibly by CPUR_05423 and CPUR_05431. Clavorubin is the principal anthraquinone metabolite produced by the cluster with a much higher yield compared to endocrocin. This is Ergochrome gene cluster protein CPUR_05426 from Claviceps purpurea (strain 20.1) (Ergot fungus).